Consider the following 253-residue polypeptide: Triosephosphate isomerase (253 aa).

Residues N12 and K14 each coordinate substrate. The Electrophile role is filled by H96. E169 (proton acceptor) is an active-site residue.

Belongs to the triosephosphate isomerase family. In terms of assembly, homodimer.

The protein localises to the cytoplasm. The catalysed reaction is D-glyceraldehyde 3-phosphate = dihydroxyacetone phosphate. It participates in carbohydrate biosynthesis; gluconeogenesis. Its pathway is carbohydrate degradation; glycolysis; D-glyceraldehyde 3-phosphate from glycerone phosphate: step 1/1. Its function is as follows. Antigen to the host M.1 monoclonal antibody. This chain is Triosephosphate isomerase (TPI), found in Schistosoma mansoni (Blood fluke).